We begin with the raw amino-acid sequence, 186 residues long: Large ribosomal subunit protein eL15 (186 aa).

Residues 163–186 (RGLTSAGKKGRGLNKKGKGAEKVR) form a disordered region. Residues 170–179 (KKGRGLNKKG) show a composition bias toward basic residues.

It belongs to the eukaryotic ribosomal protein eL15 family.

The sequence is that of Large ribosomal subunit protein eL15 from Methanosphaera stadtmanae (strain ATCC 43021 / DSM 3091 / JCM 11832 / MCB-3).